A 208-amino-acid chain; its full sequence is Calaxin (208 aa).

3 EF-hand domains span residues 64-99 (TDDM…FLHG), 100-135 (TLEE…SLLK), and 145-180 (GVKD…ENLL). The Ca(2+) site is built by Asp77, Asp79, Asp81, Asp113, Asn115, Asp117, Tyr119, Glu124, Asp158, Asp160, Asp162, Lys164, and Asp169.

As to quaternary structure, component of the outer dynein arm-docking complex along with ODAD1, ODAD2, ODAD3 and ODAD4.

The protein localises to the cytoplasm. It localises to the cytoskeleton. The protein resides in the cilium axoneme. Its subcellular location is the cell projection. It is found in the cilium. The protein localises to the flagellum. Its function is as follows. Component of the outer dynein arm-docking complex (ODA-DC) that mediates outer dynein arms (ODA) binding onto the doublet microtubule. Seems to regulate the assembly of both ODAs and their axonemal docking complex onto ciliary microtubules. Regulates ciliary and flagellar motility and is required for cilia-driven determination of body laterality. This chain is Calaxin (clxn), found in Xenopus laevis (African clawed frog).